The following is a 437-amino-acid chain: Eukaryotic peptide chain release factor subunit 1 (437 aa).

Ala-2 is modified (N-acetylalanine). Residues 61-64 carry the NIKS motif; plays an important role in translational termination motif; sequence NIKS. Lys-63 is subject to 4-hydroxylysine. Residue Lys-87 forms a Glycyl lysine isopeptide (Lys-Gly) (interchain with G-Cter in SUMO2) linkage. Gln-185 is modified (N5-methylglutamine). Lys-279 is covalently cross-linked (Glycyl lysine isopeptide (Lys-Gly) (interchain with G-Cter in ubiquitin)). Thr-347 is subject to Phosphothreonine. Lys-404 participates in a covalent cross-link: Glycyl lysine isopeptide (Lys-Gly) (interchain with G-Cter in SUMO2).

It belongs to the eukaryotic release factor 1 family. In terms of assembly, component of the eRF1-eRF3-GTP ternary complex, composed of ETF1/ERF1 and eRF3 (GSPT1/ERF3A or GSPT2/ERF3B) and GTP. Component of the transient SURF (SMG1-UPF1-eRF1-eRF3) complex. Interacts with JMJD4. The ETF1-GSPT1 complex interacts with JMJD4. Hydroxylation at Lys-63 by JMJD4 promotes its translational termination efficiency. Post-translationally, methylated at Gln-185 by N6AMT1. In terms of processing, ubiquitinated at Lys-279 via 'Lys-6'-linked polyubiquitin chains by RNF14 and RNF25 in response to ribosome collisions (ribosome stalling), leading to its degradation by the proteasome and rescue of stalled ribosomes.

Its subcellular location is the cytoplasm. In terms of biological role, component of the eRF1-eRF3-GTP ternary complex, a ternary complex that mediates translation termination in response to the termination codons. The eRF1-eRF3-GTP complex binds to a stop codon in the ribosomal A-site. ETF1/ERF1 is responsible for stop codon recognition and inducing hydrolysis of peptidyl-tRNA. Following GTP hydrolysis, eRF3 (GSPT1/ERF3A or GSPT2/ERF3B) dissociates, permitting ETF1/eRF1 to accommodate fully in the A-site, followed by hydrolysis of peptidyl-tRNA. Component of the transient SURF complex which recruits UPF1 to stalled ribosomes in the context of nonsense-mediated decay (NMD) of mRNAs containing premature stop codons. Required for SHFL-mediated translation termination which inhibits programmed ribosomal frameshifting (-1PRF) of mRNA from viruses and cellular genes. This chain is Eukaryotic peptide chain release factor subunit 1 (ETF1), found in Bos taurus (Bovine).